The sequence spans 229 residues: Protein rep (229 aa).

Residue Tyr-214 participates in DNA binding.

This sequence belongs to the Gram-positive plasmids replication protein type 1 family.

In terms of biological role, produces a single-strand nick in a specific site of the plasmid, and this nick results in single-strand replication by rolling circle mechanism. The polypeptide is Protein rep (Staphylococcus aureus).